Reading from the N-terminus, the 544-residue chain is Methionine--tRNA ligase (544 aa).

The 'HIGH' region motif lies at 10–20; sequence PYANGSLHLGH. Residues C141, C144, C153, and C156 each contribute to the Zn(2+) site. A 'KMSKS' region motif is present at residues 329–333; it reads KLSTS. Residue T332 participates in ATP binding.

It belongs to the class-I aminoacyl-tRNA synthetase family. MetG type 1 subfamily. In terms of assembly, monomer. Zn(2+) serves as cofactor.

It localises to the cytoplasm. It catalyses the reaction tRNA(Met) + L-methionine + ATP = L-methionyl-tRNA(Met) + AMP + diphosphate. Functionally, is required not only for elongation of protein synthesis but also for the initiation of all mRNA translation through initiator tRNA(fMet) aminoacylation. The polypeptide is Methionine--tRNA ligase (Bacillus cereus (strain Q1)).